Consider the following 58-residue polypeptide: Photosystem II reaction center protein K (58 aa).

The propeptide occupies M1–A21. The helical transmembrane segment at I29 to F49 threads the bilayer.

It belongs to the PsbK family. PSII is composed of 1 copy each of membrane proteins PsbA, PsbB, PsbC, PsbD, PsbE, PsbF, PsbH, PsbI, PsbJ, PsbK, PsbL, PsbM, PsbT, PsbX, PsbY, PsbZ, Psb30/Ycf12, at least 3 peripheral proteins of the oxygen-evolving complex and a large number of cofactors. It forms dimeric complexes.

The protein resides in the plastid. It is found in the chloroplast thylakoid membrane. Its function is as follows. One of the components of the core complex of photosystem II (PSII). PSII is a light-driven water:plastoquinone oxidoreductase that uses light energy to abstract electrons from H(2)O, generating O(2) and a proton gradient subsequently used for ATP formation. It consists of a core antenna complex that captures photons, and an electron transfer chain that converts photonic excitation into a charge separation. The polypeptide is Photosystem II reaction center protein K (Physcomitrium patens (Spreading-leaved earth moss)).